Consider the following 308-residue polypeptide: Glycine--tRNA ligase alpha subunit (308 aa).

The protein belongs to the class-II aminoacyl-tRNA synthetase family. As to quaternary structure, tetramer of two alpha and two beta subunits.

The protein resides in the cytoplasm. It carries out the reaction tRNA(Gly) + glycine + ATP = glycyl-tRNA(Gly) + AMP + diphosphate. The sequence is that of Glycine--tRNA ligase alpha subunit from Brucella canis (strain ATCC 23365 / NCTC 10854 / RM-666).